Reading from the N-terminus, the 477-residue chain is Ribulose bisphosphate carboxylase large chain (477 aa).

Positions 1–2 are excised as a propeptide; it reads MS. P3 bears the N-acetylproline mark. K14 bears the N6,N6,N6-trimethyllysine mark. Substrate contacts are provided by N123 and T173. K175 functions as the Proton acceptor in the catalytic mechanism. A substrate-binding site is contributed by K177. Mg(2+) contacts are provided by K201, D203, and E204. K201 is subject to N6-carboxylysine. Residue H294 is the Proton acceptor of the active site. Residues R295, H327, and S379 each coordinate substrate.

Belongs to the RuBisCO large chain family. Type I subfamily. Heterohexadecamer of 8 large chains and 8 small chains; disulfide-linked. The disulfide link is formed within the large subunit homodimers. It depends on Mg(2+) as a cofactor. Post-translationally, the disulfide bond which can form in the large chain dimeric partners within the hexadecamer appears to be associated with oxidative stress and protein turnover.

The protein localises to the plastid. The protein resides in the chloroplast. It carries out the reaction 2 (2R)-3-phosphoglycerate + 2 H(+) = D-ribulose 1,5-bisphosphate + CO2 + H2O. The catalysed reaction is D-ribulose 1,5-bisphosphate + O2 = 2-phosphoglycolate + (2R)-3-phosphoglycerate + 2 H(+). Its function is as follows. RuBisCO catalyzes two reactions: the carboxylation of D-ribulose 1,5-bisphosphate, the primary event in carbon dioxide fixation, as well as the oxidative fragmentation of the pentose substrate in the photorespiration process. Both reactions occur simultaneously and in competition at the same active site. This chain is Ribulose bisphosphate carboxylase large chain, found in Nicotiana otophora (Tobacco).